Consider the following 365-residue polypeptide: Alanine racemase (365 aa).

The active-site Proton acceptor; specific for D-alanine is Lys32. Position 32 is an N6-(pyridoxal phosphate)lysine (Lys32). A substrate-binding site is contributed by Arg128. Tyr257 functions as the Proton acceptor; specific for L-alanine in the catalytic mechanism. Met305 is a binding site for substrate.

The protein belongs to the alanine racemase family. Pyridoxal 5'-phosphate is required as a cofactor.

It carries out the reaction L-alanine = D-alanine. It functions in the pathway amino-acid biosynthesis; D-alanine biosynthesis; D-alanine from L-alanine: step 1/1. Catalyzes the interconversion of L-alanine and D-alanine. May also act on other amino acids. The sequence is that of Alanine racemase (alr) from Francisella tularensis subsp. tularensis (strain WY96-3418).